Here is a 602-residue protein sequence, read N- to C-terminus: Elongation factor 4 (602 aa).

In terms of domain architecture, tr-type G spans Ser-7–Gln-189. Residues Asp-19–Thr-24 and Asn-136–Asp-139 contribute to the GTP site.

The protein belongs to the TRAFAC class translation factor GTPase superfamily. Classic translation factor GTPase family. LepA subfamily.

Its subcellular location is the cell inner membrane. The catalysed reaction is GTP + H2O = GDP + phosphate + H(+). Required for accurate and efficient protein synthesis under certain stress conditions. May act as a fidelity factor of the translation reaction, by catalyzing a one-codon backward translocation of tRNAs on improperly translocated ribosomes. Back-translocation proceeds from a post-translocation (POST) complex to a pre-translocation (PRE) complex, thus giving elongation factor G a second chance to translocate the tRNAs correctly. Binds to ribosomes in a GTP-dependent manner. This chain is Elongation factor 4, found in Prochlorococcus marinus (strain MIT 9301).